We begin with the raw amino-acid sequence, 256 residues long: UPF0259 membrane protein plu2479 (256 aa).

5 helical membrane passes run 23 to 43 (TLTLAVLAALVTTLLGHLFIP), 89 to 109 (IFSSMIGSVLLVGGVLTLVAA), 132 to 152 (LFLLLLICTLLIQFGLMLMLV), 192 to 212 (LLVPAILLWLTARLLLVFIID), and 221 to 241 (MAGIILGVFNNLISAILLIYL).

It belongs to the UPF0259 family.

The protein localises to the cell inner membrane. The sequence is that of UPF0259 membrane protein plu2479 from Photorhabdus laumondii subsp. laumondii (strain DSM 15139 / CIP 105565 / TT01) (Photorhabdus luminescens subsp. laumondii).